We begin with the raw amino-acid sequence, 1210 residues long: Histone-lysine N-methyltransferase EHMT2 (1210 aa).

Low complexity predominate over residues 1–23 (MAAAAGAAAAAAAEGEAPAEMGA). Disordered stretches follow at residues 1 to 262 (MAAA…LEEW) and 280 to 386 (DERV…EYME). Alanine 2 is modified (N-acetylalanine). The segment covering 26–38 (LEKETRGATERVH) has biased composition (basic and acidic residues). Serine 40 carries the post-translational modification Phosphoserine. At threonine 44 the chain carries Phosphothreonine. Residue serine 47 is modified to Phosphoserine. The segment covering 105–128 (GRILLGHATKSFPSSPSKGGSCPS) has biased composition (low complexity). Serine 140 is modified (phosphoserine). The span at 155 to 165 (PGAQGAAAAGS) shows a compositional bias: low complexity. The residue at position 173 (serine 173) is a Phosphoserine. Lysine 185 carries the N6,N6,N6-trimethyllysine; by EHMT2; alternate modification. Lysine 185 is modified (N6,N6-dimethyllysine; by EHMT2; alternate). Residues 198 to 216 (PEKRPPEIQHFRMSDDVHS) show a composition bias toward basic and acidic residues. Glycyl lysine isopeptide (Lys-Gly) (interchain with G-Cter in SUMO2) cross-links involve residues lysine 219 and lysine 229. Serine 232, serine 242, and serine 246 each carry phosphoserine. The span at 280 to 291 (DERVDSDSKSEV) shows a compositional bias: basic and acidic residues. Positions 298–327 (LSEEEEEEEEEEEEEEEEEEEEEEEEDEES) are enriched in acidic residues. Over residues 338 to 347 (GRRKAKKKWR) the composition is skewed to basic residues. Residues serine 350, serine 412, and serine 413 each carry the phosphoserine modification. Positions 548–608 (IPRGDGVTPP…LADTIDSSGP (61 aa)) are disordered. Threonine 555 carries the post-translational modification Phosphothreonine. Serine 569 carries the phosphoserine modification. Lysine 634 is covalently cross-linked (Glycyl lysine isopeptide (Lys-Gly) (interchain with G-Cter in SUMO2)). ANK repeat units lie at residues 649–678 (FHPR…DPNF), 684–713 (SKRT…NINA), 717–746 (QQRT…CVYS), 750–780 (DGST…DVNA), 784–813 (GGWT…DVTL), 817–846 (EENI…DLHA), and 850–879 (HGDT…NPEL). Residues 817–819 (EEN) are histone H3K9me binding. The Pre-SET domain occupies 972–1035 (QHCTCVDDCS…NCKNRVVQSG (64 aa)). Zn(2+) is bound by residues cysteine 974, cysteine 976, cysteine 980, cysteine 985, cysteine 987, cysteine 1017, cysteine 1021, cysteine 1023, and cysteine 1027. An SET domain is found at 1038–1155 (VRLQLYRTAK…TGEELGFDYG (118 aa)). S-adenosyl-L-methionine-binding positions include 1048–1050 (MGW), tyrosine 1085, and 1112–1113 (NH). Residues 1074-1093 (DAEADVREDDSYLFDLDNKD) are interaction with histone H3. Cysteine 1115 contributes to the Zn(2+) binding site. Residues 1154–1157 (YGDR) form an interaction with histone H3 region. Residues 1164–1180 (KYFTCQCGSEKCKHSAE) enclose the Post-SET domain. Cysteine 1168 contacts Zn(2+). S-adenosyl-L-methionine is bound at residue glutamine 1169. Residues cysteine 1170 and cysteine 1175 each coordinate Zn(2+). Phosphoserine is present on serine 1204. Phosphothreonine is present on threonine 1210.

This sequence belongs to the class V-like SAM-binding methyltransferase superfamily. Histone-lysine methyltransferase family. Suvar3-9 subfamily. As to quaternary structure, heterodimer; heterodimerizes with EHMT1/GLP. Interacts with GFI1B and WIZ. Part of the E2F6.com-1 complex in G0 phase composed of E2F6, MGA, MAX, TFDP1, CBX3, BAT8, EHMT1, RING1, RNF2, MBLR, L3MBTL2 and YAF2. Part of a complex composed of TRIM28, HDAC1, HDAC2 and EHMT2. Interacts with UHRF1. Interacts with CDYL. Interacts with REST only in the presence of CDYL. Part of a complex containing at least CDYL, REST, WIZ, SETB1, EHMT1 and EHMT2. Interacts with PRDM9 and CDYL; interaction only takes place when PRDM9 is bound to hotspot DNA. Interacts with SMYD5. In terms of processing, methylated at Lys-185; automethylated. Expressed in all tissues examined, with high levels in fetal liver, thymus, lymph node, spleen and peripheral blood leukocytes and lower level in bone marrow.

It localises to the nucleus. Its subcellular location is the chromosome. The catalysed reaction is N(6)-methyl-L-lysyl(9)-[histone H3] + S-adenosyl-L-methionine = N(6),N(6)-dimethyl-L-lysyl(9)-[histone H3] + S-adenosyl-L-homocysteine + H(+). It carries out the reaction L-lysyl(9)-[histone H3] + S-adenosyl-L-methionine = N(6)-methyl-L-lysyl(9)-[histone H3] + S-adenosyl-L-homocysteine + H(+). In terms of biological role, histone methyltransferase that specifically mono- and dimethylates 'Lys-9' of histone H3 (H3K9me1 and H3K9me2, respectively) in euchromatin. H3K9me represents a specific tag for epigenetic transcriptional repression by recruiting HP1 proteins to methylated histones. Also mediates monomethylation of 'Lys-56' of histone H3 (H3K56me1) in G1 phase, leading to promote interaction between histone H3 and PCNA and regulating DNA replication. Also weakly methylates 'Lys-27' of histone H3 (H3K27me). Also required for DNA methylation, the histone methyltransferase activity is not required for DNA methylation, suggesting that these 2 activities function independently. Probably targeted to histone H3 by different DNA-binding proteins like E2F6, MGA, MAX and/or DP1. May also methylate histone H1. In addition to the histone methyltransferase activity, also methylates non-histone proteins: mediates dimethylation of 'Lys-373' of p53/TP53. Also methylates CDYL, WIZ, ACIN1, DNMT1, HDAC1, ERCC6, KLF12 and itself. This is Histone-lysine N-methyltransferase EHMT2 (EHMT2) from Homo sapiens (Human).